The primary structure comprises 1147 residues: Tip elongation aberrant protein 1 (1147 aa).

Over residues 1 to 16 the composition is skewed to basic residues; that stretch reads MSFLFKRNKGSAHKPT. Residues 1–64 are disordered; sequence MSFLFKRNKG…TGSGSHITAS (64 aa). The span at 18–32 shows a compositional bias: polar residues; the sequence is PNFSKTSTTPSTSQL. 6 Kelch repeats span residues 94–144, 146–198, 199–253, 254–303, 305–351, and 355–402; these read EIYI…LIGN, FIVF…CLGS, KICL…TFSD, KLYI…VVEG, LYVF…TLSC, and TLVL…SNST. 2 disordered regions span residues 384–403 and 408–547; these read SVPT…NSTG and SAFN…NAQS. 3 stretches are compositionally biased toward polar residues: residues 385–403, 408–465, and 472–489; these read VPTT…NSTG, SAFN…SNDL, and TRSN…LNSH. A compositionally biased stretch (low complexity) spans 502-512; the sequence is SSLNSQQLSNQ. Ser503 bears the Phosphoserine mark. Over residues 519–547 the composition is skewed to polar residues; the sequence is VSPTLSFVPSSHSMEQGNGSVASANNAQS. An interaction with tea4 region spans residues 538–1147; it reads SVASANNAQS…AKEPVHDNEN (610 aa). Coiled coils occupy residues 611–649, 716–838, 879–990, and 1084–1105; these read KLYE…LEKV, QTSS…IIDA, KNNE…ALEE, and IKSL…AKEK. The interval 948 to 1147 is retention at microtubule cell ends; sequence KALEQRNTGA…AKEPVHDNEN (200 aa).

Major component of the tea1 cell-end complex. Interacts with rax2, tea4 and tip1. Interacts with for3 in the presence of tea4.

Its subcellular location is the cytoplasm. It is found in the cytoskeleton. In terms of biological role, cell polarity protein. Acts as an end marker, directing the growth machinery to the cell poles. Involved in the regulation of microtubular organization, affecting the maintenance of a single central axis. Prevents the curling of microtubule tips around the cell ends and is required for the retention of polarity factors such as pom1, tip1 and tea2 at the cell ends, necessary for the cell to grow in a straight line. Links tip1 and tea4 in a common complex. This is Tip elongation aberrant protein 1 (tea1) from Schizosaccharomyces pombe (strain 972 / ATCC 24843) (Fission yeast).